Here is a 387-residue protein sequence, read N- to C-terminus: Fructose-1,6-bisphosphate aldolase/phosphatase (387 aa).

Residue Asp13 is the Proton acceptor; for FBP phosphatase activity of the active site. Mg(2+) is bound by residues Asp13, His20, Asp54, and Asp55. Residue His20 participates in beta-D-fructose 1,6-bisphosphate binding. His20 is a binding site for dihydroxyacetone phosphate. Tyr92 contacts beta-D-fructose 1,6-bisphosphate. Gln96 is a binding site for Mg(2+). 105–106 (GN) serves as a coordination point for beta-D-fructose 1,6-bisphosphate. Position 133 (Asp133) interacts with Mg(2+). Beta-D-fructose 1,6-bisphosphate is bound at residue Lys134. Lys134 serves as a coordination point for dihydroxyacetone phosphate. Catalysis depends on Tyr229, which acts as the Proton donor/acceptor; for FBP aldolase activity. Mg(2+) is bound by residues Lys232, Asp233, and Asp234. Lys232 serves as the catalytic Schiff-base intermediate with DHAP; for FBP aldolase activity. Beta-D-fructose 1,6-bisphosphate is bound by residues 242 to 243 (QS), Arg266, Asp287, and Tyr348. Dihydroxyacetone phosphate-binding residues include Arg266 and Asp287.

It belongs to the FBP aldolase/phosphatase family. Homooctamer; dimer of tetramers. Mg(2+) serves as cofactor.

The enzyme catalyses beta-D-fructose 1,6-bisphosphate + H2O = beta-D-fructose 6-phosphate + phosphate. It carries out the reaction beta-D-fructose 1,6-bisphosphate = D-glyceraldehyde 3-phosphate + dihydroxyacetone phosphate. It participates in carbohydrate biosynthesis; gluconeogenesis. Its function is as follows. Catalyzes two subsequent steps in gluconeogenesis: the aldol condensation of dihydroxyacetone phosphate (DHAP) and glyceraldehyde-3-phosphate (GA3P) to fructose-1,6-bisphosphate (FBP), and the dephosphorylation of FBP to fructose-6-phosphate (F6P). In Ignicoccus hospitalis (strain KIN4/I / DSM 18386 / JCM 14125), this protein is Fructose-1,6-bisphosphate aldolase/phosphatase.